Consider the following 281-residue polypeptide: MQRQGTVRAPCSRIVDPHQKVNYTVCGWIITIISYLVVLFTLPLSAFFCLKVVQEYERAVIFRLGRLKHGGARGPGIFFIIPCIESFKKIDLRVVSFDVPPQEILSKDSVTVSVDAVIYFRISNATVSVINVEDAARSTKLLAQTTLRNFLGTRTLAEMLSSRDAISMQMQAALDEATDPWGVKVERVEIKDVRLPIQLQRAMAAEAEAARAAGAKIIAAEGEQLASRALADAADVIATSPCAIQLRYLQTLNSISSEKNNTIIFPFPTELIAKFIQSAAA.

Residues 28 to 48 form a helical membrane-spanning segment; it reads WIITIISYLVVLFTLPLSAFF.

The protein belongs to the band 7/mec-2 family.

The protein localises to the membrane. The protein is Stomatin-4 (sto-4) of Caenorhabditis elegans.